We begin with the raw amino-acid sequence, 101 residues long: Small ribosomal subunit protein uS14 (101 aa).

This sequence belongs to the universal ribosomal protein uS14 family. In terms of assembly, part of the 30S ribosomal subunit. Contacts proteins S3 and S10.

Functionally, binds 16S rRNA, required for the assembly of 30S particles and may also be responsible for determining the conformation of the 16S rRNA at the A site. The chain is Small ribosomal subunit protein uS14 from Xylella fastidiosa (strain 9a5c).